Reading from the N-terminus, the 391-residue chain is Choline/ethanolaminephosphotransferase 1 (391 aa).

Residues 1–49 (MGYFVPDSHIENLKSYKYQSEDRSLVSKYFLKPFWQRFCHIFPTWMAPN) are Lumenal-facing. The chain crosses the membrane as a helical span at residues 50–69 (IITLSGFAFIVINVLTVFYY). The Cytoplasmic portion of the chain corresponds to 70 to 172 (DPNLNTDTPR…YHTHTLYLSE (103 aa)). Residues 173–193 (FSGPVEGILIVCVSLILTGIY) traverse the membrane as a helical segment. At 194-211 (GKQVIWHTYLFTITVGDK) the chain is on the lumenal side. Residues 212-232 (VIDVDTLDIVFSLAVFGLVMN) form a helical membrane-spanning segment. Residues 233 to 264 (ALSAKRNVDKYYRNSTSSANNITQIEQDSAIK) lie on the Cytoplasmic side of the membrane. A helical transmembrane segment spans residues 265 to 282 (GLLPFFAYYASIALLVWM). The Lumenal portion of the chain corresponds to 283–285 (QPS). The helical transmembrane segment at 286 to 308 (FITLSFILSVGFTGAFTVGRIIV) threads the bilayer. Residues 309–321 (CHLTKQSFPMFNA) are Cytoplasmic-facing. A helical transmembrane segment spans residues 322-342 (PMLIPLCQIVLYKICLSLWGI). Topologically, residues 343 to 346 (ESNK) are lumenal. Residues 347 to 367 (IVFALSWLGFGLSLGVHIMFM) form a helical membrane-spanning segment. The Cytoplasmic segment spans residues 368 to 391 (NDIIHEFTEYLDVYALSIKRSKLT).

It belongs to the CDP-alcohol phosphatidyltransferase class-I family. Mg(2+) is required as a cofactor.

The protein resides in the golgi apparatus membrane. The enzyme catalyses CDP-ethanolamine + a 1,2-diacyl-sn-glycerol = a 1,2-diacyl-sn-glycero-3-phosphoethanolamine + CMP + H(+). It catalyses the reaction CDP-choline + a 1,2-diacyl-sn-glycerol = a 1,2-diacyl-sn-glycero-3-phosphocholine + CMP + H(+). The catalysed reaction is CDP-N-methylethanolamine + a 1,2-diacyl-sn-glycerol = a 1,2-diacyl-sn-glycero-3-phospho-N-methylethanolamine + CMP + H(+). It carries out the reaction CDP-N,N-dimethylethanolamine + a 1,2-diacyl-sn-glycerol = a 1,2-diacyl-sn-glycero-3-phospho-N,N-dimethylethanolamine + CMP + H(+). The enzyme catalyses 1,2-di-(9Z-octadecenoyl)-glycerol + CDP-choline = 1,2-di-(9Z-octadecenoyl)-sn-glycero-3-phosphocholine + CMP + H(+). It catalyses the reaction 1,2-di-(9Z-octadecenoyl)-glycerol + CDP-ethanolamine = 1,2-di-(9Z-octadecenoyl)-sn-glycero-3-phosphoethanolamine + CMP + H(+). It participates in phospholipid metabolism; phosphatidylethanolamine biosynthesis; phosphatidylethanolamine from ethanolamine: step 3/3. The protein operates within phospholipid metabolism; phosphatidylcholine biosynthesis; phosphatidylcholine from phosphocholine: step 2/2. With respect to regulation, requires a divalent cation activator, and is inhibited by CMP. Activated by phospholipids, especially phosphatidylcholine. Functionally, catalyzes the final step in the CDP-ethanolamine route leading to phosphatidylethanolamine (PE). Can also catalyze the formation of phosphatidylcholine (PC) from CDP-choline, but does not substantially contribute to PC biosynthesis. Preferentially uses CDP-dimethylethanolamine and CDP-propanolamine as aminoalcohol substrates. Shows highest activity toward di-unsaturated diacylglycerol species as lipid substrates. The CDP-ethanolamine pathway may play a role in maintaining the proper PE species distribution. The protein is Choline/ethanolaminephosphotransferase 1 (EPT1) of Saccharomyces cerevisiae (strain ATCC 204508 / S288c) (Baker's yeast).